The primary structure comprises 167 residues: RVGADAEAQECHSNPRCCSFASNMPYALLSSSVSFYLPLLVMLFVYARVFVVAKRQRRLLRRELGRFPPEESPRSPSRSPSPVAGGTGEAPDGVPSCGRRPARLLPLREHRALRTLGLIMGIFSLCWLPFFLANVLRALAGPSIVPNGVFIALNWLGYANSAFNPLI.

Residues 1 to 25 (RVGADAEAQECHSNPRCCSFASNMP) are Extracellular-facing. Cysteines 11 and 17 form a disulfide. Residues 26–47 (YALLSSSVSFYLPLLVMLFVYA) form a helical membrane-spanning segment. At 48–114 (RVFVVAKRQR…LPLREHRALR (67 aa)) the chain is on the cytoplasmic side. The interval 66-97 (RFPPEESPRSPSRSPSPVAGGTGEAPDGVPSC) is disordered. Residues 115–136 (TLGLIMGIFSLCWLPFFLANVL) traverse the membrane as a helical segment. Residues 137–148 (RALAGPSIVPNG) are Extracellular-facing. The helical transmembrane segment at 149–167 (VFIALNWLGYANSAFNPLI) threads the bilayer.

This sequence belongs to the G-protein coupled receptor 1 family. Adrenergic receptor subfamily. ADRB3 sub-subfamily. In terms of assembly, interacts with ARRDC3.

It localises to the cell membrane. In terms of biological role, beta-adrenergic receptors mediate the catecholamine-induced activation of adenylate cyclase through the action of G proteins. Beta-3 is involved in the regulation of lipolysis and thermogenesis. The chain is Beta-3 adrenergic receptor (ADRB3) from Meriones unguiculatus (Mongolian jird).